An 885-amino-acid chain; its full sequence is Exosome complex component 10 (885 aa).

The span at 1–10 shows a compositional bias: basic and acidic residues; that stretch reads MAPPSPREHQ. Disordered stretches follow at residues 1 to 23 and 210 to 232; these read MAPP…PDAE and KPLP…EDLD. Lys19 is covalently cross-linked (Glycyl lysine isopeptide (Lys-Gly) (interchain with G-Cter in SUMO2)). Over residues 217–230 the composition is skewed to basic and acidic residues; it reads SKERRERPQDRPED. The region spanning 289-455 is the 3'-5' exonuclease domain; sequence HVVSSLDELV…YIYDRMRLEL (167 aa). Mg(2+) contacts are provided by Asp313, Glu315, Asp371, and Asp440. The region spanning 503 to 583 is the HRDC domain; it reads NSQQLTAFQL…QQAREMPLLK (81 aa). Lys583 participates in a covalent cross-link: Glycyl lysine isopeptide (Lys-Gly) (interchain with G-Cter in SUMO1); alternate. Lys583 participates in a covalent cross-link: Glycyl lysine isopeptide (Lys-Gly) (interchain with G-Cter in SUMO2); alternate. A Glycyl lysine isopeptide (Lys-Gly) (interchain with G-Cter in SUMO2) cross-link involves residue Lys710. The disordered stretch occupies residues 730–885; it reads VQKEPKEAAK…RGFRHNWPKR (156 aa). Basic and acidic residues-rich tracts occupy residues 732 to 756 and 776 to 794; these read KEPK…KEES and ATKK…EQKQ. Ser821 bears the Phosphoserine mark. Glycyl lysine isopeptide (Lys-Gly) (interchain with G-Cter in SUMO2) cross-links involve residues Lys833, Lys859, and Lys873.

It belongs to the exosome component 10/RRP6 family. In terms of assembly, component of the RNA exosome complex. The catalytically inactive RNA exosome core complex (Exo-9) associates with the catalytic subunit EXOSC10/RRP6 (via its N-terminus). Exo-9 may associate with DIS3 to form the nucleolar exosome complex, or DIS3L to form the cytoplasmic exosome complex. The RNA exosome complex interacts with cofactors C1D/RRP47, MPHOSPH6/MPP6 and MTREX/MTR4. Interacts with MTREX; the interaction with MTREX mediates the association of MTREX with nuclear RNA exosomes. Part of the small subunit (SSU) processome, composed of more than 70 proteins and the RNA chaperone small nucleolar RNA (snoRNA) U3. Interacts with ALYREF/THOC4. Interacts with DHX36; this interaction occurs in a RNase-insensitive manner. Interacts with NRDE2. Interacts (via C-terminus) with USP36 (via C-terminus); the interaction is facilitated by the association with RNA and promotes sumoylation of EXOSC10. The cofactor is Mg(2+). In terms of processing, sumoylated by USP36; sumoylation does not significantly affect EXOSC10 nucleolar localization and association with core exosome and USP36, but regulates the nucleolar RNA exosome activity in rRNA processing by promoting binding of EXOSC10 to pre-rRNAs. Effects of sumoylation on EXOSC10 levels vary between different studies. Sumoylation of EXOSC10 is required for the modulation of EXOSC10 effects on cellular protein translation and cell proliferation. Sumoylation is promoted by mild hypothermia. As to expression, expressed in testis (at protein level).

The protein resides in the cytoplasm. Its subcellular location is the nucleus. The protein localises to the nucleolus. It is found in the nucleoplasm. Catalytic component of the RNA exosome complex which has 3'-&gt;5' exoribonuclease activity and participates in a multitude of cellular RNA processing and degradation events. In the nucleus, the RNA exosome complex is involved in proper maturation of stable RNA species such as rRNA, snRNA and snoRNA, in the elimination of RNA processing by-products and non-coding 'pervasive' transcripts, such as antisense RNA species and promoter-upstream transcripts (PROMPTs), and of mRNAs with processing defects, thereby limiting or excluding their export to the cytoplasm. Part of the small subunit (SSU) processome, first precursor of the small eukaryotic ribosomal subunit. During the assembly of the SSU processome in the nucleolus, many ribosome biogenesis factors, an RNA chaperone and ribosomal proteins associate with the nascent pre-rRNA and work in concert to generate RNA folding, modifications, rearrangements and cleavage as well as targeted degradation of pre-ribosomal RNA by the RNA exosome. The RNA exosome may be involved in Ig class switch recombination (CSR) and/or Ig variable region somatic hypermutation (SHM) by targeting AICDA deamination activity to transcribed dsDNA substrates. In the cytoplasm, the RNA exosome complex is involved in general mRNA turnover and specifically degrades inherently unstable mRNAs containing AU-rich elements (AREs) within their 3' untranslated regions, and in RNA surveillance pathways, preventing translation of aberrant mRNAs. It seems to be involved in degradation of histone mRNA. EXOSC10 is required for nucleolar localization of C1D and probably mediates the association of MTREX, C1D and MPHOSPH6 with the RNA exosome involved in the maturation of 5.8S rRNA. Plays a role in the recruitment of replication protein A complex (RPA) and RAD51 to DNA double-strand breaks caused by irradiation, contributing to DNA repair by homologous recombination. Regulates levels of damage-induced RNAs in order to prevent DNA-RNA hybrid formation at DNA double-strand breaks and limit DNA end resection after damage. Plays a role in oocyte development, maturation and survival. Required for normal testis development and mitotic division of spermatogonia. Plays a role in proper embryo development. Required for global protein translation. Required for cell proliferation. This is Exosome complex component 10 from Rattus norvegicus (Rat).